Here is a 74-residue protein sequence, read N- to C-terminus: Translational regulator CsrA (74 aa).

Belongs to the CsrA/RsmA family. In terms of assembly, homodimer; the beta-strands of each monomer intercalate to form a hydrophobic core, while the alpha-helices form wings that extend away from the core.

It is found in the cytoplasm. Functionally, a translational regulator that binds mRNA to regulate translation initiation and/or mRNA stability. Usually binds in the 5'-UTR at or near the Shine-Dalgarno sequence preventing ribosome-binding, thus repressing translation. Its main target seems to be the major flagellin gene, while its function is anatagonized by FliW. The chain is Translational regulator CsrA from Alkaliphilus oremlandii (strain OhILAs) (Clostridium oremlandii (strain OhILAs)).